Reading from the N-terminus, the 299-residue chain is UTP--glucose-1-phosphate uridylyltransferase (299 aa).

Belongs to the UDPGP type 2 family.

It catalyses the reaction alpha-D-glucose 1-phosphate + UTP + H(+) = UDP-alpha-D-glucose + diphosphate. It participates in carbohydrate metabolism; nucleotide-sugar metabolism. It functions in the pathway capsule biogenesis; capsule polysaccharide biosynthesis. This is UTP--glucose-1-phosphate uridylyltransferase (cap4C) from Streptococcus pneumoniae serotype 4 (strain ATCC BAA-334 / TIGR4).